A 307-amino-acid polypeptide reads, in one-letter code: Aspartate carbamoyltransferase catalytic subunit (307 aa).

Carbamoyl phosphate contacts are provided by Arg56 and Thr57. Lys84 serves as a coordination point for L-aspartate. Residues Arg106, His136, and Gln139 each coordinate carbamoyl phosphate. Positions 169 and 221 each coordinate L-aspartate. Positions 262 and 263 each coordinate carbamoyl phosphate.

Belongs to the aspartate/ornithine carbamoyltransferase superfamily. ATCase family. As to quaternary structure, heterododecamer (2C3:3R2) of six catalytic PyrB chains organized as two trimers (C3), and six regulatory PyrI chains organized as three dimers (R2).

The enzyme catalyses carbamoyl phosphate + L-aspartate = N-carbamoyl-L-aspartate + phosphate + H(+). It participates in pyrimidine metabolism; UMP biosynthesis via de novo pathway; (S)-dihydroorotate from bicarbonate: step 2/3. Functionally, catalyzes the condensation of carbamoyl phosphate and aspartate to form carbamoyl aspartate and inorganic phosphate, the committed step in the de novo pyrimidine nucleotide biosynthesis pathway. This chain is Aspartate carbamoyltransferase catalytic subunit, found in Streptococcus pneumoniae (strain JJA).